The following is a 490-amino-acid chain: MRINPTTSGSEVSTVEKKNLGRIVKIIGPVLDVAFPPGKMPNIYNALVVQGRDNEQTNVTCEVQQLLGNNRVRAVAMSDTDGLMRGMEVSDTGAPISVPVGGSTLGRIFNVLGQPVDNLGPVDTNTTSPIHRSAPAFIQLDTKLSIFETGIKVVDLLAPYRRGGKIGLFGGAGVGKTVLIMELINNIAKAHGGVSVFGGVGERTREGNDLYLEMKESGVINEENIPESKVALVYGQMNEPPGARMRVGLTALTMAEYFRDVNEQDVLLFIDNIFRFVQAGSEVSALLGRMPSAVGYQPTLSTEMGSLQERITSTKEGSITSIQAVYVPADDLTDPAPATTFAHLDATTVLSRGLAAKGIYPAVDPLDSTSTMLQPRIVGEEHYETAQRVKQTLQRYKELQDIIAILGLDELSEEDRLTVARARKIERFLSQPFFVAEVFTGSPGKYVGLAETIRGFQLILSGELDGLPEQAFYLVGNIDEATAKAMNLKT.

An ATP-binding site is contributed by 170–177 (GGAGVGKT).

This sequence belongs to the ATPase alpha/beta chains family. As to quaternary structure, F-type ATPases have 2 components, CF(1) - the catalytic core - and CF(0) - the membrane proton channel. CF(1) has five subunits: alpha(3), beta(3), gamma(1), delta(1), epsilon(1). CF(0) has four main subunits: a(1), b(1), b'(1) and c(9-12).

It localises to the plastid. It is found in the chloroplast thylakoid membrane. It carries out the reaction ATP + H2O + 4 H(+)(in) = ADP + phosphate + 5 H(+)(out). Produces ATP from ADP in the presence of a proton gradient across the membrane. The catalytic sites are hosted primarily by the beta subunits. In Ipomoea aquatica (Water spinach), this protein is ATP synthase subunit beta, chloroplastic.